Consider the following 134-residue polypeptide: ATP synthase epsilon chain, chloroplastic (134 aa).

The protein belongs to the ATPase epsilon chain family. In terms of assembly, F-type ATPases have 2 components, CF(1) - the catalytic core - and CF(0) - the membrane proton channel. CF(1) has five subunits: alpha(3), beta(3), gamma(1), delta(1), epsilon(1). CF(0) has three main subunits: a, b and c.

Its subcellular location is the plastid. It is found in the chloroplast thylakoid membrane. In terms of biological role, produces ATP from ADP in the presence of a proton gradient across the membrane. The chain is ATP synthase epsilon chain, chloroplastic from Drimys granadensis.